The sequence spans 99 residues: Aspartyl/glutamyl-tRNA(Asn/Gln) amidotransferase subunit C (99 aa).

It belongs to the GatC family. Heterotrimer of A, B and C subunits.

The catalysed reaction is L-glutamyl-tRNA(Gln) + L-glutamine + ATP + H2O = L-glutaminyl-tRNA(Gln) + L-glutamate + ADP + phosphate + H(+). It carries out the reaction L-aspartyl-tRNA(Asn) + L-glutamine + ATP + H2O = L-asparaginyl-tRNA(Asn) + L-glutamate + ADP + phosphate + 2 H(+). Allows the formation of correctly charged Asn-tRNA(Asn) or Gln-tRNA(Gln) through the transamidation of misacylated Asp-tRNA(Asn) or Glu-tRNA(Gln) in organisms which lack either or both of asparaginyl-tRNA or glutaminyl-tRNA synthetases. The reaction takes place in the presence of glutamine and ATP through an activated phospho-Asp-tRNA(Asn) or phospho-Glu-tRNA(Gln). This Mycolicibacterium smegmatis (strain ATCC 700084 / mc(2)155) (Mycobacterium smegmatis) protein is Aspartyl/glutamyl-tRNA(Asn/Gln) amidotransferase subunit C.